Reading from the N-terminus, the 900-residue chain is Bifunctional uridylyltransferase/uridylyl-removing enzyme (900 aa).

The segment at 1–342 is uridylyltransferase; it reads MPQVDPELFD…PCEQPVQIQP (342 aa). Residues 343–705 are uridylyl-removing; sequence LNSRFQLRDG…TTQREFESGS (363 aa). The region spanning 461–583 is the HD domain; that stretch reads VDAHTLNLIK…VGDQTHLDYL (123 aa). ACT domains are found at residues 706–789 and 816–891; these read QIFI…IIQR and VLEV…DNGR.

The protein belongs to the GlnD family. It depends on Mg(2+) as a cofactor.

It carries out the reaction [protein-PII]-L-tyrosine + UTP = [protein-PII]-uridylyl-L-tyrosine + diphosphate. The catalysed reaction is [protein-PII]-uridylyl-L-tyrosine + H2O = [protein-PII]-L-tyrosine + UMP + H(+). Uridylyltransferase (UTase) activity is inhibited by glutamine, while glutamine activates uridylyl-removing (UR) activity. Functionally, modifies, by uridylylation and deuridylylation, the PII regulatory proteins (GlnB and homologs), in response to the nitrogen status of the cell that GlnD senses through the glutamine level. Under low glutamine levels, catalyzes the conversion of the PII proteins and UTP to PII-UMP and PPi, while under higher glutamine levels, GlnD hydrolyzes PII-UMP to PII and UMP (deuridylylation). Thus, controls uridylylation state and activity of the PII proteins, and plays an important role in the regulation of nitrogen assimilation and metabolism. This is Bifunctional uridylyltransferase/uridylyl-removing enzyme from Pseudomonas aeruginosa (strain LESB58).